The sequence spans 725 residues: Dipeptidyl-peptidase 5 (725 aa).

The first 18 residues, Met-1 to Ala-18, serve as a signal peptide directing secretion. Residues Asn-75, Asn-96, Asn-153, Asn-258, Asn-383, and Asn-453 are each glycosylated (N-linked (GlcNAc...) asparagine). The Charge relay system role is filled by Ser-563. Asn-610 is a glycosylation site (N-linked (GlcNAc...) asparagine). Residues Asp-646 and His-678 each act as charge relay system in the active site.

The protein belongs to the peptidase S9C family.

The protein resides in the secreted. The chain is Dipeptidyl-peptidase 5 from Aspergillus oryzae (strain ATCC 42149 / RIB 40) (Yellow koji mold).